The chain runs to 240 residues: Ubiquinone biosynthesis O-methyltransferase (240 aa).

Residues Arg-44, Gly-64, Asp-85, and Met-129 each contribute to the S-adenosyl-L-methionine site.

The protein belongs to the methyltransferase superfamily. UbiG/COQ3 family.

The catalysed reaction is a 3-demethylubiquinol + S-adenosyl-L-methionine = a ubiquinol + S-adenosyl-L-homocysteine + H(+). It catalyses the reaction a 3-(all-trans-polyprenyl)benzene-1,2-diol + S-adenosyl-L-methionine = a 2-methoxy-6-(all-trans-polyprenyl)phenol + S-adenosyl-L-homocysteine + H(+). The protein operates within cofactor biosynthesis; ubiquinone biosynthesis. In terms of biological role, O-methyltransferase that catalyzes the 2 O-methylation steps in the ubiquinone biosynthetic pathway. This chain is Ubiquinone biosynthesis O-methyltransferase, found in Shigella flexneri serotype 5b (strain 8401).